A 233-amino-acid polypeptide reads, in one-letter code: Phosphoribosylformylglycinamidine synthase subunit PurQ (233 aa).

One can recognise a Glutamine amidotransferase type-1 domain in the interval S3–A233. C87 serves as the catalytic Nucleophile. Active-site residues include H204 and E206.

As to quaternary structure, part of the FGAM synthase complex composed of 1 PurL, 1 PurQ and 2 PurS subunits.

The protein resides in the cytoplasm. The enzyme catalyses N(2)-formyl-N(1)-(5-phospho-beta-D-ribosyl)glycinamide + L-glutamine + ATP + H2O = 2-formamido-N(1)-(5-O-phospho-beta-D-ribosyl)acetamidine + L-glutamate + ADP + phosphate + H(+). It carries out the reaction L-glutamine + H2O = L-glutamate + NH4(+). It functions in the pathway purine metabolism; IMP biosynthesis via de novo pathway; 5-amino-1-(5-phospho-D-ribosyl)imidazole from N(2)-formyl-N(1)-(5-phospho-D-ribosyl)glycinamide: step 1/2. In terms of biological role, part of the phosphoribosylformylglycinamidine synthase complex involved in the purines biosynthetic pathway. Catalyzes the ATP-dependent conversion of formylglycinamide ribonucleotide (FGAR) and glutamine to yield formylglycinamidine ribonucleotide (FGAM) and glutamate. The FGAM synthase complex is composed of three subunits. PurQ produces an ammonia molecule by converting glutamine to glutamate. PurL transfers the ammonia molecule to FGAR to form FGAM in an ATP-dependent manner. PurS interacts with PurQ and PurL and is thought to assist in the transfer of the ammonia molecule from PurQ to PurL. The sequence is that of Phosphoribosylformylglycinamidine synthase subunit PurQ from Nitrobacter hamburgensis (strain DSM 10229 / NCIMB 13809 / X14).